The sequence spans 306 residues: Lipoyl synthase (306 aa).

Residues Cys55, Cys60, Cys66, Cys81, Cys85, Cys88, and Ser294 each coordinate [4Fe-4S] cluster. The Radical SAM core domain maps to 67–283; sequence WNHRTATFLL…RAYALARGFR (217 aa).

It belongs to the radical SAM superfamily. Lipoyl synthase family. [4Fe-4S] cluster serves as cofactor.

Its subcellular location is the cytoplasm. The enzyme catalyses [[Fe-S] cluster scaffold protein carrying a second [4Fe-4S](2+) cluster] + N(6)-octanoyl-L-lysyl-[protein] + 2 oxidized [2Fe-2S]-[ferredoxin] + 2 S-adenosyl-L-methionine + 4 H(+) = [[Fe-S] cluster scaffold protein] + N(6)-[(R)-dihydrolipoyl]-L-lysyl-[protein] + 4 Fe(3+) + 2 hydrogen sulfide + 2 5'-deoxyadenosine + 2 L-methionine + 2 reduced [2Fe-2S]-[ferredoxin]. The protein operates within protein modification; protein lipoylation via endogenous pathway; protein N(6)-(lipoyl)lysine from octanoyl-[acyl-carrier-protein]: step 2/2. Its function is as follows. Catalyzes the radical-mediated insertion of two sulfur atoms into the C-6 and C-8 positions of the octanoyl moiety bound to the lipoyl domains of lipoate-dependent enzymes, thereby converting the octanoylated domains into lipoylated derivatives. The protein is Lipoyl synthase of Chloroflexus aggregans (strain MD-66 / DSM 9485).